The sequence spans 1114 residues: Constitutive coactivator of PPAR-gamma-like protein 1 (1114 aa).

An interaction with YES1, SRC and FYN region spans residues 339-402 (PPHYLARPNP…YNLAEPALTL (64 aa)). 2 disordered regions span residues 372–396 (QAKP…YNLA) and 411–519 (EQNY…GNQI). Over residues 431-443 (SPINPAPSGSPNH) the composition is skewed to polar residues. The segment covering 477-498 (GWEKTGSHSEPQARGDPGDQTK) has biased composition (basic and acidic residues). Over residues 499–510 (AEGSSTASSGSQ) the composition is skewed to polar residues. Thr-651 carries the phosphothreonine modification. The tract at residues 825 to 1114 (AEQAAKVEKM…LEAAVLKKEE (290 aa)) is RNA binding. Omega-N-methylarginine occurs at positions 869, 880, and 882. Positions 918 to 940 (FSGSDSSRTSKSQGGIQPIPSQG) are disordered. The residue at position 928 (Lys-928) is an N6-acetyllysine. Low complexity predominate over residues 929 to 940 (SQGGIQPIPSQG). Ser-956 carries the post-translational modification Phosphoserine. Residues Arg-978 and Arg-982 each carry the omega-N-methylarginine modification. The interval 1009–1099 (AIQGKPPYAA…LNALSTDSGC (91 aa)) is disordered. Ser-1019 bears the Phosphoserine mark. Residues 1022-1033 (EVAKELKSRSGE) are compositionally biased toward basic and acidic residues. The segment covering 1034-1043 (SKSSAMSSDG) has biased composition (polar residues). 3 positions are modified to phosphoserine: Ser-1040, Ser-1041, and Ser-1044. The span at 1060 to 1097 (MNGSAGDTRAPSHSESALNNDSKTCNTNPHLNALSTDS) shows a compositional bias: polar residues.

This sequence belongs to the constitutive coactivator of PPAR-gamma family. In terms of assembly, interacts with PURA. Interacts with YES1, SRC, FYN. Upon tyrosine phosphorylation, interacts with PIK3R1. Post-translationally, arg-978 is dimethylated, probably to asymmetric dimethylarginine. Phosphorylated on tyrosine by src family kinases upon ultraviolet exposure.

The protein localises to the cytoplasm. It is found in the cell membrane. Functionally, component of the oxidative stress-induced survival signaling. May regulate the activation of SRC family protein kinases. May act as a scaffolding protein enabling SRC family protein kinases to phosphorylate and activate PI3-kinase. Binds IGF2 RNA and promotes the production of IGF2 protein. This chain is Constitutive coactivator of PPAR-gamma-like protein 1 (FAM120A), found in Bos taurus (Bovine).